Reading from the N-terminus, the 268-residue chain is Early nodulin-20 (268 aa).

Residues 1 to 24 (MSSSSPILLMFIFSIWMLISYSES) form the signal peptide. A Phytocyanin domain is found at 25 to 129 (TDYLVGDSEN…GLKLAVVVMV (105 aa)). Asn-67 carries N-linked (GlcNAc...) asparagine glycosylation. A disulfide bond links Cys-83 and Cys-117. 2 stretches are compositionally biased toward pro residues: residues 134-145 (SSPPPPPSPPTP) and 160-185 (PSPP…TPIP). Residues 134–253 (SSPPPPPSPP…SGSKGGGAGH (120 aa)) are disordered. The span at 199–235 (PSLSKSPSPSESPSLAPSPSDSVASLAPSSSPSDESP) shows a compositional bias: low complexity. Ser-243 is lipidated: GPI-anchor amidated serine. Residues 244 to 268 (SGSKGGGAGHGFLEVSIAMMMFLIF) constitute a propeptide, removed in mature form.

It belongs to the early nodulin-like (ENODL) family.

The protein localises to the cell membrane. Its function is as follows. May act as a carbohydrate transporter. The chain is Early nodulin-20 from Medicago truncatula (Barrel medic).